Consider the following 181-residue polypeptide: Protein Syd (181 aa).

It belongs to the Syd family.

It localises to the cell inner membrane. In terms of biological role, interacts with the SecY protein in vivo. May bind preferentially to an uncomplexed state of SecY, thus functioning either as a chelating agent for excess SecY in the cell or as a regulatory factor that negatively controls the translocase function. The protein is Protein Syd of Shigella flexneri.